A 260-amino-acid polypeptide reads, in one-letter code: Hydroxyethylthiazole kinase (260 aa).

Methionine 38 contacts substrate. Residues lysine 114 and serine 161 each contribute to the ATP site. Glycine 188 is a binding site for substrate.

The protein belongs to the Thz kinase family. The cofactor is Mg(2+).

The enzyme catalyses 5-(2-hydroxyethyl)-4-methylthiazole + ATP = 4-methyl-5-(2-phosphooxyethyl)-thiazole + ADP + H(+). Its pathway is cofactor biosynthesis; thiamine diphosphate biosynthesis; 4-methyl-5-(2-phosphoethyl)-thiazole from 5-(2-hydroxyethyl)-4-methylthiazole: step 1/1. Functionally, catalyzes the phosphorylation of the hydroxyl group of 4-methyl-5-beta-hydroxyethylthiazole (THZ). In Campylobacter lari (strain RM2100 / D67 / ATCC BAA-1060), this protein is Hydroxyethylthiazole kinase.